The following is a 382-amino-acid chain: Mannitol-1-phosphate 5-dehydrogenase (382 aa).

4–15 (AVHFGAGNIGRG) contributes to the NAD(+) binding site.

This sequence belongs to the mannitol dehydrogenase family. In terms of assembly, monomer.

It carries out the reaction D-mannitol 1-phosphate + NAD(+) = beta-D-fructose 6-phosphate + NADH + H(+). In Streptococcus mutans serotype c (strain ATCC 700610 / UA159), this protein is Mannitol-1-phosphate 5-dehydrogenase (mtlD).